A 452-amino-acid polypeptide reads, in one-letter code: Glutathione gamma-glutamylcysteinyltransferase 2 (452 aa).

One can recognise a Peptidase C83 domain in the interval 1 to 220 (MSMASLYRRS…GFMLISRPHR (220 aa)). The stretch at 287–315 (EDVNQNLSSEEKSRLKLKQELLKQVQETK) forms a coiled coil.

Belongs to the phytochelatin synthase family. In terms of tissue distribution, expressed in shoots, roots, leaves, stems and flowers.

The enzyme catalyses [Glu(-Cys)](n)-Gly + glutathione + H(+) = [Glu(-Cys)](n+1)-Gly + glycine. Requires cadmium for activity. Also activated in heterologous system by AsO(4)(3-) ions, but not by Cu(2+), Zn(2+), Mn(2+) or Ni(2+) ions. In terms of biological role, involved in the synthesis of phytochelatins (PC) and homophytochelatins (hPC), the heavy-metal-binding peptides of plants. This chain is Glutathione gamma-glutamylcysteinyltransferase 2 (PCS2), found in Arabidopsis thaliana (Mouse-ear cress).